The sequence spans 177 residues: uncharacterized protein (177 aa).

This is an uncharacterized protein from Acanthamoeba polyphaga mimivirus (APMV).